We begin with the raw amino-acid sequence, 452 residues long: Bifunctional protein GlmU (452 aa).

The pyrophosphorylase stretch occupies residues Met1–Arg226. Residues Leu8–Gly11, Lys22, Gln73, Gly78–Thr79, Tyr100–Asp102, Gly137, Glu151, Asn166, and Asn224 each bind UDP-N-acetyl-alpha-D-glucosamine. Asp102 provides a ligand contact to Mg(2+). A Mg(2+)-binding site is contributed by Asn224. A linker region spans residues Leu227–Ser247. Residues Gly248–Lys452 form an N-acetyltransferase region. Positions 330 and 348 each coordinate UDP-N-acetyl-alpha-D-glucosamine. The active-site Proton acceptor is the His360. Positions 363 and 374 each coordinate UDP-N-acetyl-alpha-D-glucosamine. Residues Ala377, Asn383 to Tyr384, Ser402, Ala420, and Arg437 contribute to the acetyl-CoA site.

In the N-terminal section; belongs to the N-acetylglucosamine-1-phosphate uridyltransferase family. It in the C-terminal section; belongs to the transferase hexapeptide repeat family. In terms of assembly, homotrimer. The cofactor is Mg(2+).

The protein resides in the cytoplasm. The enzyme catalyses alpha-D-glucosamine 1-phosphate + acetyl-CoA = N-acetyl-alpha-D-glucosamine 1-phosphate + CoA + H(+). The catalysed reaction is N-acetyl-alpha-D-glucosamine 1-phosphate + UTP + H(+) = UDP-N-acetyl-alpha-D-glucosamine + diphosphate. It functions in the pathway nucleotide-sugar biosynthesis; UDP-N-acetyl-alpha-D-glucosamine biosynthesis; N-acetyl-alpha-D-glucosamine 1-phosphate from alpha-D-glucosamine 6-phosphate (route II): step 2/2. Its pathway is nucleotide-sugar biosynthesis; UDP-N-acetyl-alpha-D-glucosamine biosynthesis; UDP-N-acetyl-alpha-D-glucosamine from N-acetyl-alpha-D-glucosamine 1-phosphate: step 1/1. It participates in bacterial outer membrane biogenesis; LPS lipid A biosynthesis. Functionally, catalyzes the last two sequential reactions in the de novo biosynthetic pathway for UDP-N-acetylglucosamine (UDP-GlcNAc). The C-terminal domain catalyzes the transfer of acetyl group from acetyl coenzyme A to glucosamine-1-phosphate (GlcN-1-P) to produce N-acetylglucosamine-1-phosphate (GlcNAc-1-P), which is converted into UDP-GlcNAc by the transfer of uridine 5-monophosphate (from uridine 5-triphosphate), a reaction catalyzed by the N-terminal domain. The protein is Bifunctional protein GlmU of Psychromonas ingrahamii (strain DSM 17664 / CCUG 51855 / 37).